Reading from the N-terminus, the 23-residue chain is Unknown protein NF016 from 2D-PAGE (23 aa).

The chain is Unknown protein NF016 from 2D-PAGE from Naegleria fowleri (Brain eating amoeba).